The primary structure comprises 408 residues: Arginine biosynthesis bifunctional protein ArgJ (408 aa).

Substrate contacts are provided by Thr156, Lys182, Thr193, Glu279, Asn403, and Ser408. The Nucleophile role is filled by Thr193.

It belongs to the ArgJ family. In terms of assembly, heterotetramer of two alpha and two beta chains.

It localises to the cytoplasm. The enzyme catalyses N(2)-acetyl-L-ornithine + L-glutamate = N-acetyl-L-glutamate + L-ornithine. It catalyses the reaction L-glutamate + acetyl-CoA = N-acetyl-L-glutamate + CoA + H(+). It participates in amino-acid biosynthesis; L-arginine biosynthesis; L-ornithine and N-acetyl-L-glutamate from L-glutamate and N(2)-acetyl-L-ornithine (cyclic): step 1/1. It functions in the pathway amino-acid biosynthesis; L-arginine biosynthesis; N(2)-acetyl-L-ornithine from L-glutamate: step 1/4. Functionally, catalyzes two activities which are involved in the cyclic version of arginine biosynthesis: the synthesis of N-acetylglutamate from glutamate and acetyl-CoA as the acetyl donor, and of ornithine by transacetylation between N(2)-acetylornithine and glutamate. The protein is Arginine biosynthesis bifunctional protein ArgJ of Bordetella pertussis (strain Tohama I / ATCC BAA-589 / NCTC 13251).